Here is a 365-residue protein sequence, read N- to C-terminus: Galactoside alpha-(1,2)-fucosyltransferase 1 (365 aa).

The Cytoplasmic segment spans residues 1 to 8 (MWVPSRRH). Residues 9–28 (LCLTFLLVCVLAAIFFLNVY) form a helical; Signal-anchor for type II membrane protein membrane-spanning segment. The Lumenal portion of the chain corresponds to 29-365 (QDLFYSGLDL…LSPLQMLAGP (337 aa)). 3 N-linked (GlcNAc...) asparagine glycosylation sites follow: Asn65, Asn301, and Asn327.

The protein belongs to the glycosyltransferase 11 family.

The protein localises to the golgi apparatus. It is found in the golgi stack membrane. It catalyses the reaction a beta-D-galactosyl-(1-&gt;4)-N-acetyl-beta-D-glucosaminyl derivative + GDP-beta-L-fucose = an alpha-L-Fuc-(1-&gt;2)-beta-D-Gal-(1-&gt;4)-beta-D-GlcNAc derivative + GDP + H(+). It carries out the reaction a ganglioside GA1 + GDP-beta-L-fucose = a ganglioside Fuc-GA1 + GDP + H(+). The enzyme catalyses a beta-D-Gal-(1-&gt;3)-beta-D-GlcNAc-(1-&gt;3)-beta-D-Gal-(1-&gt;4)-beta-D-Glc-(1&lt;-&gt;1')-Cer(d18:1(4E)) + GDP-beta-L-fucose = alpha-L-fucosyl-(1-&gt;2)- beta-D-galactosyl-(1-&gt;3)-N-acetyl-beta-D-glucosaminyl-(1-&gt;3)-beta-D-galactosyl-(1-&gt;4)-beta-D-glucosyl-(1&lt;-&gt;1')-N-acylsphing-4-enine + GDP + H(+). The catalysed reaction is a neolactoside nLc4Cer(d18:1(4E)) + GDP-beta-L-fucose = a neolactoside IV(2)-alpha-Fuc-nLc4Cer(d18:1(4E)) + GDP + H(+). It catalyses the reaction a ganglioside GM1 + GDP-beta-L-fucose = a ganglioside Fuc-GM1 + GDP + H(+). It carries out the reaction beta-D-galactosyl-(1-&gt;3)-N-acetyl-D-galactosamine + GDP-beta-L-fucose = alpha-L-fucosyl-(1-&gt;2)-beta-D-galactosyl-(1-&gt;3)-N-acetyl-D-galactosamine + GDP + H(+). It functions in the pathway protein modification; protein glycosylation. Its function is as follows. Catalyzes the transfer of L-fucose, from a guanosine diphosphate-beta-L-fucose, to the terminal galactose residue of glycoconjugates through an alpha(1,2) linkage leading to H antigen synthesis that is an intermediate substrate in the synthesis of ABO blood group antigens. H antigen is essential for maturation of the glomerular layer of the main olfactory bulb, in cell migration and early cell-cell contacts during tumor associated angiogenesis. Preferentially fucosylates soluble lactose and to a lesser extent fucosylates glycolipids gangliosides GA1 and GM1a. The chain is Galactoside alpha-(1,2)-fucosyltransferase 1 from Sus scrofa (Pig).